Here is an 855-residue protein sequence, read N- to C-terminus: Pre-mRNA-splicing factor SYF1 (855 aa).

HAT repeat units lie at residues 15–47, 48–80, 90–122, 124–158, 160–192, 198–230, 235–268, 270–305, and 369–407; these read LVFEEEDLPYEEEIMRNQFSVKCWLRYIEFKQG, APKPRLNQLYERALKLLPCSYKLWYRYLKARRA, PAYEDVNNCHERAFVFMHKMPRLWLDYCQFLMD, GRVTHTRRTFDRALRALPITQHSRIWPLYLRFLRS, PLPETAVRGYRRFLKLSPESAEEYIEYLKSSDR, QRLATVVNDERFVSKAGKSNYQLWHELCDLISQ, VQSLNVDAIIRGGLTRFTDQLGKLWCSLADYYIR, GHFEKARDVYEEAIRTVMTVRDFTQVFDSYAQFEES, and GRPREIINTYTEAVQTVDPFKATGKPHTLWVAFAKFYED. Residue Lys-420 is modified to N6-acetyllysine. HAT repeat units follow at residues 498-530, 532-566, 571-605, 643-677, and 679-713; these read GTFQSTKAVYDRILDLRIATPQIVINYAMFLEE, KYFEESFKAYERGISLFKWPNVSDIWSTYLTKFIS, RKLERARDLFEQALDGCPPKYAKTLYLLYAQLEEE, YGVTHTRGIYQKAIEVLSDEHAREMCLRFADMECK, and GEIDRARAIYSFCSQICDPRTTGAFWQTWKDFEVR. The interval 808-855 is disordered; that stretch reads AELAQQANPEEIQLGEDEDEDEMDLEPNEVRLEQQSVPAAVFGSLKED. Over residues 820-834 the composition is skewed to acidic residues; sequence QLGEDEDEDEMDLEP. Ser-851 bears the Phosphoserine mark.

The protein belongs to the crooked-neck family. As to quaternary structure, associates with RNA polymerase II, the TCR-specific proteins CKN1/CSA and ERCC6/CSB, and XPA. Identified in the spliceosome C complex. Component of the XAB2 complex, a multimeric protein complex composed of XAB2, PRPF19, AQR, ZNF830, ISY1, and PPIE. Identified in a pentameric intron-binding (IB) complex composed of AQR, XAB2, ISY1, ZNF830 and PPIE that is incorporated into the spliceosome as a preassembled complex. The IB complex does not contain PRPF19.

The protein resides in the nucleus. Its function is as follows. Involved in pre-mRNA splicing as component of the spliceosome. Involved in transcription-coupled repair (TCR), transcription and pre-mRNA splicing. The sequence is that of Pre-mRNA-splicing factor SYF1 (Xab2) from Rattus norvegicus (Rat).